Consider the following 95-residue polypeptide: Small ribosomal subunit protein mS37 (95 aa).

The CHCH domain maps to Ala-27–Lys-69. 2 short sequence motifs (cx9C motif) span residues Cys-30 to Cys-40 and Cys-51 to Cys-61. 2 cysteine pairs are disulfide-bonded: Cys-30–Cys-61 and Cys-40–Cys-51.

It belongs to the mitochondrion-specific ribosomal protein mS37 family. As to quaternary structure, component of the mitochondrial small ribosomal subunit (mt-SSU). Mature yeast 74S mitochondrial ribosomes consist of a small (37S) and a large (54S) subunit. The 37S small subunit contains a 15S ribosomal RNA (15S mt-rRNA) and 34 different proteins. The 54S large subunit contains a 21S rRNA (21S mt-rRNA) and 46 different proteins.

The protein resides in the mitochondrion. Its subcellular location is the mitochondrion matrix. Component of the mitochondrial ribosome (mitoribosome), a dedicated translation machinery responsible for the synthesis of mitochondrial genome-encoded proteins, including at least some of the essential transmembrane subunits of the mitochondrial respiratory chain. The mitoribosomes are attached to the mitochondrial inner membrane and translation products are cotranslationally integrated into the membrane. This Saccharomyces cerevisiae (strain ATCC 204508 / S288c) (Baker's yeast) protein is Small ribosomal subunit protein mS37 (MRP10).